A 220-amino-acid chain; its full sequence is Germin-like protein subfamily T member 2 (220 aa).

Residues 1–27 (MTTLQISSSLFRSFLLVICVFVIPSLS) form the signal peptide. Cysteines 37 and 52 form a disulfide. The 149-residue stretch at 64–212 (SGLGGPLNTS…TFRTDDVTVN (149 aa)) folds into the Cupin type-1 domain. Residue asparagine 71 is glycosylated (N-linked (GlcNAc...) asparagine). The Mn(2+) site is built by histidine 112, histidine 114, and glutamate 119. A glycan (N-linked (GlcNAc...) asparagine) is linked at asparagine 136. Histidine 158 contacts Mn(2+).

The protein belongs to the germin family. As to quaternary structure, oligomer (believed to be a pentamer but probably hexamer).

It localises to the secreted. Its subcellular location is the extracellular space. The protein resides in the apoplast. Functionally, may play a role in plant defense. Probably has no oxalate oxidase activity even if the active site is conserved. This chain is Germin-like protein subfamily T member 2, found in Arabidopsis thaliana (Mouse-ear cress).